The primary structure comprises 139 residues: uncharacterized protein (139 aa).

This is an uncharacterized protein from Dryophytes versicolor (chameleon treefrog).